The chain runs to 129 residues: Ropporin-1 (129 aa).

Positions 11–34 constitute an RIIa domain; that stretch reads PELPELLKTQPPDLIQWAAEYFGA.

Belongs to the ropporin family. In terms of assembly, homodimer. Interacts with AKAP3. May interact with SPA17. Interacts with RHPN1. Interacts with FSCB; the interaction increases upon spermatozoa capacitation conditions. Interacts with CFAP61. Post-translationally, sumoylated, sumoylation decreases upon spermatozoa capacitation conditions.

The protein resides in the cell projection. The protein localises to the cilium. It localises to the flagellum. Important for male fertility. With ROPN1L, involved in fibrous sheath integrity and sperm motility, plays a role in PKA-dependent signaling processes required for spermatozoa capacitation. This chain is Ropporin-1, found in Mesocricetus auratus (Golden hamster).